The primary structure comprises 259 residues: DNA repair protein RecO (259 aa).

This sequence belongs to the RecO family.

In terms of biological role, involved in DNA repair and RecF pathway recombination. The sequence is that of DNA repair protein RecO from Leuconostoc mesenteroides subsp. mesenteroides (strain ATCC 8293 / DSM 20343 / BCRC 11652 / CCM 1803 / JCM 6124 / NCDO 523 / NBRC 100496 / NCIMB 8023 / NCTC 12954 / NRRL B-1118 / 37Y).